Reading from the N-terminus, the 338-residue chain is Glyceraldehyde-3-phosphate dehydrogenase (338 aa).

NAD(+) contacts are provided by residues 12–13 (RI), D34, and R79. D-glyceraldehyde 3-phosphate-binding positions include 150–152 (SCT), T181, 210–211 (TG), and R233. C151 functions as the Nucleophile in the catalytic mechanism. N315 is an NAD(+) binding site.

Belongs to the glyceraldehyde-3-phosphate dehydrogenase family. In terms of assembly, homotetramer.

It localises to the cytoplasm. It carries out the reaction D-glyceraldehyde 3-phosphate + phosphate + NAD(+) = (2R)-3-phospho-glyceroyl phosphate + NADH + H(+). It participates in carbohydrate degradation; glycolysis; pyruvate from D-glyceraldehyde 3-phosphate: step 1/5. This Hypocrea atroviridis (Trichoderma atroviride) protein is Glyceraldehyde-3-phosphate dehydrogenase (gpd1).